Here is a 173-residue protein sequence, read N- to C-terminus: 3-hydroxydecanoyl-[acyl-carrier-protein] dehydratase (173 aa).

His-71 is a catalytic residue.

Belongs to the thioester dehydratase family. FabA subfamily. Homodimer.

The protein resides in the cytoplasm. It carries out the reaction a (3R)-hydroxyacyl-[ACP] = a (2E)-enoyl-[ACP] + H2O. The catalysed reaction is (3R)-hydroxydecanoyl-[ACP] = (2E)-decenoyl-[ACP] + H2O. The enzyme catalyses (2E)-decenoyl-[ACP] = (3Z)-decenoyl-[ACP]. Its pathway is lipid metabolism; fatty acid biosynthesis. In terms of biological role, necessary for the introduction of cis unsaturation into fatty acids. Catalyzes the dehydration of (3R)-3-hydroxydecanoyl-ACP to E-(2)-decenoyl-ACP and then its isomerization to Z-(3)-decenoyl-ACP. Can catalyze the dehydratase reaction for beta-hydroxyacyl-ACPs with saturated chain lengths up to 16:0, being most active on intermediate chain length. This is 3-hydroxydecanoyl-[acyl-carrier-protein] dehydratase from Bradyrhizobium diazoefficiens (strain JCM 10833 / BCRC 13528 / IAM 13628 / NBRC 14792 / USDA 110).